Consider the following 527-residue polypeptide: Peptide chain release factor 3 (527 aa).

The 270-residue stretch at Asn9 to Gln278 folds into the tr-type G domain. GTP-binding positions include Ser18–Thr25, Asp86–His90, and Asn140–Asp143.

This sequence belongs to the TRAFAC class translation factor GTPase superfamily. Classic translation factor GTPase family. PrfC subfamily.

The protein resides in the cytoplasm. Functionally, increases the formation of ribosomal termination complexes and stimulates activities of RF-1 and RF-2. It binds guanine nucleotides and has strong preference for UGA stop codons. It may interact directly with the ribosome. The stimulation of RF-1 and RF-2 is significantly reduced by GTP and GDP, but not by GMP. This Haemophilus influenzae (strain PittGG) protein is Peptide chain release factor 3.